Reading from the N-terminus, the 387-residue chain is TSC22 domain family protein 4 (387 aa).

Disordered stretches follow at residues methionine 1–tyrosine 85 and isoleucine 135–glycine 232. A compositionally biased stretch (pro residues) spans serine 28–aspartate 51. Threonine 57 bears the Phosphothreonine mark. Residues serine 62 and serine 165 each carry the phosphoserine modification. Residue threonine 183 is modified to Phosphothreonine. Serine 187 and serine 189 each carry phosphoserine. Threonine 223 is subject to Phosphothreonine. Serine 254, serine 258, and serine 271 each carry phosphoserine. The tract at residues leucine 336 to leucine 357 is leucine-zipper. Serine 362 is modified (phosphoserine). A disordered region spans residues glutamine 368–isoleucine 387.

This sequence belongs to the TSC-22/Dip/Bun family. In terms of assembly, forms a homodimer or heterodimer. Forms a heterodimer with TSC22D1 isoforms 1 and 2. Interacts with NRBP1.

It localises to the nucleus. Its subcellular location is the cytoplasm. The protein localises to the cell projection. It is found in the dendrite. The protein resides in the synapse. Its function is as follows. Binds DNA and acts as a transcriptional repressor. Involved in the regulation of systematic glucose homeostasis and insulin sensitivity, via transcriptional repression of downstream insulin signaling targets such as OBP2A/LCN13. Acts as a negative regulator of lipogenic gene expression in hepatocytes and thereby mediates the control of very low-density lipoprotein release. May play a role in neurite elongation and survival. The chain is TSC22 domain family protein 4 from Rattus norvegicus (Rat).